We begin with the raw amino-acid sequence, 192 residues long: MIYQKQRNTAETQLNISISDDQSPSHINTGVGFLNHMLTLFTFHSGLSLNIEAQGDIDVDDHHVTEDIGIVIGQLLLEMIKDKKHFVRYGTMYISMDETLARVVVDISGRPYLSFNATLSKEKVGTFDTELVEEFFRAVVINARLTTHIDLIRGGNTHHEIEAIFKAFSRALGIALTATDDQRVPSSKGVIE.

Belongs to the imidazoleglycerol-phosphate dehydratase family.

Its subcellular location is the cytoplasm. It catalyses the reaction D-erythro-1-(imidazol-4-yl)glycerol 3-phosphate = 3-(imidazol-4-yl)-2-oxopropyl phosphate + H2O. Its pathway is amino-acid biosynthesis; L-histidine biosynthesis; L-histidine from 5-phospho-alpha-D-ribose 1-diphosphate: step 6/9. The sequence is that of Imidazoleglycerol-phosphate dehydratase from Staphylococcus aureus (strain MRSA252).